Reading from the N-terminus, the 146-residue chain is Zinc metalloproteinase-disintegrin salmosin-3 (146 aa).

In terms of domain architecture, Peptidase M12B spans 1-57; it reads SCPCDANSCIMSATLSNEPSSRFSDCSFSLPSRFSDCSFNQYSSDIIHYHECLLNEP. 9 disulfides stabilise this stretch: C2/C37, C4/C9, C68/C87, C79/C97, C81/C92, C91/C114, C105/C111, C110/C135, and C123/C142. The 82-residue stretch at 65 to 146 folds into the Disintegrin domain; that stretch reads PPVCGNYYPE…GQSGVCPRNT (82 aa). Residues 127–129 carry the Cell attachment site motif; the sequence is RGD.

It belongs to the venom metalloproteinase (M12B) family. P-II subfamily. P-IIb sub-subfamily. As to quaternary structure, monomer (disintegrin). Zn(2+) serves as cofactor. As to expression, expressed by the venom gland.

It localises to the secreted. Snake venom zinc metalloproteinase that inhibits ADP-induced platelet aggregation (probably by binding integrin alpha-IIb/beta-3 (ITGA2B/ITGB3)) and degrades fibrinogen. This chain is Zinc metalloproteinase-disintegrin salmosin-3, found in Gloydius brevicauda (Korean slamosa snake).